A 333-amino-acid polypeptide reads, in one-letter code: Phosphate acyltransferase (333 aa).

Belongs to the PlsX family. In terms of assembly, homodimer. Probably interacts with PlsY.

It localises to the cytoplasm. It catalyses the reaction a fatty acyl-[ACP] + phosphate = an acyl phosphate + holo-[ACP]. It functions in the pathway lipid metabolism; phospholipid metabolism. Its function is as follows. Catalyzes the reversible formation of acyl-phosphate (acyl-PO(4)) from acyl-[acyl-carrier-protein] (acyl-ACP). This enzyme utilizes acyl-ACP as fatty acyl donor, but not acyl-CoA. The protein is Phosphate acyltransferase of Thermosipho melanesiensis (strain DSM 12029 / CIP 104789 / BI429).